Reading from the N-terminus, the 404-residue chain is Probable tRNA sulfurtransferase (404 aa).

In terms of domain architecture, THUMP spans 60-165 (QPIVEALKLV…DEAAYISYEE (106 aa)). ATP contacts are provided by residues 183–184 (ML), 208–209 (HF), Arg-265, Gly-287, and Gln-296.

The protein belongs to the ThiI family.

It is found in the cytoplasm. It carries out the reaction [ThiI sulfur-carrier protein]-S-sulfanyl-L-cysteine + a uridine in tRNA + 2 reduced [2Fe-2S]-[ferredoxin] + ATP + H(+) = [ThiI sulfur-carrier protein]-L-cysteine + a 4-thiouridine in tRNA + 2 oxidized [2Fe-2S]-[ferredoxin] + AMP + diphosphate. The enzyme catalyses [ThiS sulfur-carrier protein]-C-terminal Gly-Gly-AMP + S-sulfanyl-L-cysteinyl-[cysteine desulfurase] + AH2 = [ThiS sulfur-carrier protein]-C-terminal-Gly-aminoethanethioate + L-cysteinyl-[cysteine desulfurase] + A + AMP + 2 H(+). It participates in cofactor biosynthesis; thiamine diphosphate biosynthesis. Functionally, catalyzes the ATP-dependent transfer of a sulfur to tRNA to produce 4-thiouridine in position 8 of tRNAs, which functions as a near-UV photosensor. Also catalyzes the transfer of sulfur to the sulfur carrier protein ThiS, forming ThiS-thiocarboxylate. This is a step in the synthesis of thiazole, in the thiamine biosynthesis pathway. The sulfur is donated as persulfide by IscS. The sequence is that of Probable tRNA sulfurtransferase from Streptococcus pyogenes serotype M4 (strain MGAS10750).